The following is a 516-amino-acid chain: Propionyl-CoA carboxylase, carboxyltransferase subunit (516 aa).

The disordered stretch occupies residues 1–32; that stretch reads MTMEDRIDELREKREEALKGGGEDRIASQHDK. The CoA carboxyltransferase N-terminal domain maps to 3-259; the sequence is MEDRIDELRE…NNVEDPPRVE (257 aa). The 247-residue stretch at 263 to 509 folds into the CoA carboxyltransferase C-terminal domain; sequence DPERVADELE…KSKRKSQPDK (247 aa).

This sequence belongs to the AccD/PCCB family. In terms of assembly, the propionyl coenzyme A carboxylase (PCC) complex is composed of three subunits: PccA (biotin carboxylase and biotin-carboxyl carrier), PccB (carboxyltransferase) and PccX.

The catalysed reaction is propanoyl-CoA + hydrogencarbonate + ATP = (S)-methylmalonyl-CoA + ADP + phosphate + H(+). Its pathway is metabolic intermediate metabolism; propanoyl-CoA degradation; succinyl-CoA from propanoyl-CoA: step 1/3. Its function is as follows. Part of the propionyl coenzyme A carboxylase (PCC) complex involved in propionate utilization and in the production of the poly(3-hydroxybutyrate-co-3-hydroxyvalerate)(PHBV), which is a water-insoluble biopolymer used as intracellular energy reserve material when cells grow under conditions of nutrient limitation. The complex catalyzes the carboxylation of propionyl-CoA to methylmalonyl-CoA. PCC is also able to catalyze the carboxylation of acetyl-CoA. This chain is Propionyl-CoA carboxylase, carboxyltransferase subunit, found in Haloferax mediterranei (strain ATCC 33500 / DSM 1411 / JCM 8866 / NBRC 14739 / NCIMB 2177 / R-4) (Halobacterium mediterranei).